A 130-amino-acid chain; its full sequence is Small ribosomal subunit protein uS9 (130 aa).

A disordered region spans residues 105–130 (TRDSRMVERKKPGLKKARRASQFSKR). The segment covering 106 to 115 (RDSRMVERKK) has biased composition (basic and acidic residues). Positions 116 to 130 (PGLKKARRASQFSKR) are enriched in basic residues.

Belongs to the universal ribosomal protein uS9 family.

This is Small ribosomal subunit protein uS9 from Oenococcus oeni (strain ATCC BAA-331 / PSU-1).